The primary structure comprises 338 residues: S-adenosylmethionine:tRNA ribosyltransferase-isomerase (338 aa).

The protein belongs to the QueA family. Monomer.

It localises to the cytoplasm. The catalysed reaction is 7-aminomethyl-7-carbaguanosine(34) in tRNA + S-adenosyl-L-methionine = epoxyqueuosine(34) in tRNA + adenine + L-methionine + 2 H(+). It participates in tRNA modification; tRNA-queuosine biosynthesis. Functionally, transfers and isomerizes the ribose moiety from AdoMet to the 7-aminomethyl group of 7-deazaguanine (preQ1-tRNA) to give epoxyqueuosine (oQ-tRNA). The sequence is that of S-adenosylmethionine:tRNA ribosyltransferase-isomerase from Francisella philomiragia subsp. philomiragia (strain ATCC 25017 / CCUG 19701 / FSC 153 / O#319-036).